The sequence spans 564 residues: E3 ubiquitin-protein ligase RNF168 (564 aa).

An RING-type zinc finger spans residues 16–55; it reads CGICMEILVEPVTLPCNHTLCNPCFQSTVEKANLCCPFCR. Serine 70 carries the post-translational modification Phosphoserine. The short motif at 110 to 128 is the LR motif 1 element; the sequence is LSKPGELRREYEEEISKVE. Serine 134 is subject to Phosphoserine. Residues 143-151 carry the UMI motif motif; it reads EEYIQRLLA. 2 disordered regions span residues 149-179 and 193-291; these read LLAEEEEEEKRRTERRRSEMEEQLRGDEELA and NILA…QGPE. Residues 157 to 179 are compositionally biased toward basic and acidic residues; sequence EKRRTERRRSEMEEQLRGDEELA. The MIU motif 1 motif lies at 168-191; it reads MEEQLRGDEELARRLSTSINSNYE. The residue at position 197 (serine 197) is a Phosphoserine. Lysine 210 participates in a covalent cross-link: Glycyl lysine isopeptide (Lys-Gly) (interchain with G-Cter in SUMO2). Residues 242-259 show a composition bias toward basic and acidic residues; sequence KTEHGEDMCKSKETDSSD. Over residues 275–288 the composition is skewed to polar residues; it reads PTHSPQTCPETQGQ. A phosphothreonine mark is found at threonine 348 and threonine 361. A phosphoserine mark is found at serine 413 and serine 414. The MIU motif 2 motif lies at 438 to 461; the sequence is RHKQEEQDRLLALQLQKEADKEKM. Residues 455–564 are disordered; the sequence is EADKEKMVPN…QKSILQMFQR (110 aa). Positions 465–476 match the LR motif 2 motif; that stretch reads RQKGSPDQYQLR. Over residues 466–480 the composition is skewed to polar residues; sequence QKGSPDQYQLRTSSP. Position 469 is a phosphoserine (serine 469). The segment covering 491 to 515 has biased composition (basic and acidic residues); sequence NVKDRNSPKQTADRSKSQRSRKGEY. Composition is skewed to polar residues over residues 519–531 and 555–564; these read FESTWKGSVNGTK and QKSILQMFQR. A Glycyl lysine isopeptide (Lys-Gly) (interchain with G-Cter in SUMO2) cross-link involves residue lysine 524.

It belongs to the RNF168 family. As to quaternary structure, monomer. Interacts with UBE2N/UBC13. Sumoylated with SUMO1 by PIAS4 in response to double-strand breaks (DSBs). Post-translationally, ubiquitinated.

The protein localises to the nucleus. It catalyses the reaction S-ubiquitinyl-[E2 ubiquitin-conjugating enzyme]-L-cysteine + [acceptor protein]-L-lysine = [E2 ubiquitin-conjugating enzyme]-L-cysteine + N(6)-ubiquitinyl-[acceptor protein]-L-lysine.. The protein operates within protein modification; protein ubiquitination. E3 ubiquitin-protein ligase required for accumulation of repair proteins to sites of DNA damage. Acts with UBE2N/UBC13 to amplify the RNF8-dependent histone ubiquitination. Recruited to sites of DNA damage at double-strand breaks (DSBs) by binding to ubiquitinated histone H2A and H2AX and amplifies the RNF8-dependent H2A ubiquitination, promoting the formation of 'Lys-63'-linked ubiquitin conjugates. This leads to concentrate ubiquitinated histones H2A and H2AX at DNA lesions to the threshold required for recruitment of TP53BP1 and BRCA1. Also recruited at DNA interstrand cross-links (ICLs) sites and promotes accumulation of 'Lys-63'-linked ubiquitination of histones H2A and H2AX, leading to recruitment of FAAP20 and Fanconi anemia (FA) complex, followed by interstrand cross-link repair. H2A ubiquitination also mediates the ATM-dependent transcriptional silencing at regions flanking DSBs in cis, a mechanism to avoid collision between transcription and repair intermediates. Also involved in class switch recombination in immune system, via its role in regulation of DSBs repair. Following DNA damage, promotes the ubiquitination and degradation of JMJD2A/KDM4A in collaboration with RNF8, leading to unmask H4K20me2 mark and promote the recruitment of TP53BP1 at DNA damage sites. Not able to initiate 'Lys-63'-linked ubiquitination in vitro; possibly due to partial occlusion of the UBE2N/UBC13-binding region. Catalyzes monoubiquitination of 'Lys-13' and 'Lys-15' of nucleosomal histone H2A (H2AK13Ub and H2AK15Ub, respectively). The polypeptide is E3 ubiquitin-protein ligase RNF168 (Rattus norvegicus (Rat)).